The following is a 392-amino-acid chain: 1-deoxy-D-xylulose 5-phosphate reductoisomerase (392 aa).

The NADPH site is built by T10, G11, S12, I13, R37, Q38, and N124. K125 serves as a coordination point for 1-deoxy-D-xylulose 5-phosphate. Position 126 (E126) interacts with NADPH. Residue D150 coordinates Mn(2+). 1-deoxy-D-xylulose 5-phosphate is bound by residues S151, E152, S179, and H202. E152 lines the Mn(2+) pocket. Position 208 (G208) interacts with NADPH. S215, N220, K221, and E224 together coordinate 1-deoxy-D-xylulose 5-phosphate. E224 provides a ligand contact to Mn(2+).

The protein belongs to the DXR family. The cofactor is Mg(2+). Requires Mn(2+) as cofactor.

It catalyses the reaction 2-C-methyl-D-erythritol 4-phosphate + NADP(+) = 1-deoxy-D-xylulose 5-phosphate + NADPH + H(+). It functions in the pathway isoprenoid biosynthesis; isopentenyl diphosphate biosynthesis via DXP pathway; isopentenyl diphosphate from 1-deoxy-D-xylulose 5-phosphate: step 1/6. In terms of biological role, catalyzes the NADPH-dependent rearrangement and reduction of 1-deoxy-D-xylulose-5-phosphate (DXP) to 2-C-methyl-D-erythritol 4-phosphate (MEP). This is 1-deoxy-D-xylulose 5-phosphate reductoisomerase from Cupriavidus metallidurans (strain ATCC 43123 / DSM 2839 / NBRC 102507 / CH34) (Ralstonia metallidurans).